The following is a 663-amino-acid chain: RING finger protein 145 (663 aa).

A run of 14 helical transmembrane segments spans residues 53-73 (YLAL…LTLP), 77-97 (LVQL…HQIS), 123-143 (FTTA…VMKT), 146-166 (IWLF…VPLE), 168-188 (IVII…YFLG), 205-222 (LVQV…MSLW), 225-245 (LVVP…QIYS), 275-295 (YSLL…LTLC), 316-336 (TEGV…LQVV), 340-360 (FLLS…MLEI), 384-404 (SLCL…CQFF), 410-430 (LLII…TLFI), 460-480 (LLEF…TIFG), and 482-502 (WTVM…WLRA). Positions 81–84 (YLYF) match the YLYF motif motif. The active site involves cysteine 537. The RING-type; atypical zinc-finger motif lies at 537–575 (CAICYQDMKSAVITPCSHFFHAGCLKKWLYVQDTCPLCH). Residues 587-663 (LGTEAAPQPP…EGEVCPVESA (77 aa)) are disordered. The segment covering 619-628 (GTGTQEGSGD) has biased composition (polar residues).

Interacts (via YLYF motif) with INSIG1 and INSIG2.

The protein localises to the endoplasmic reticulum membrane. It carries out the reaction S-ubiquitinyl-[E2 ubiquitin-conjugating enzyme]-L-cysteine + [acceptor protein]-L-lysine = [E2 ubiquitin-conjugating enzyme]-L-cysteine + N(6)-ubiquitinyl-[acceptor protein]-L-lysine.. In terms of biological role, E3 ubiquitin ligase that catalyzes the direct transfer of ubiquitin from E2 ubiquitin-conjugating enzyme to a specific substrate. In response to bacterial infection, negatively regulates the phagocyte oxidative burst by controlling the turnover of the NADPH oxidase complex subunits. Promotes monoubiquitination of CYBA and 'Lys-48'-linked polyubiquitination and degradation of CYBB NADPH oxidase catalytic subunits, both essential for the generation of antimicrobial reactive oxygen species. Involved in the maintenance of cholesterol homeostasis. In response to high sterol concentrations ubiquitinates HMGCR, a rate-limiting enzyme in cholesterol biosynthesis, and targets it for degradation. The interaction with INSIG1 is required for this function. In addition, triggers ubiquitination of SCAP, likely inhibiting its transport to the Golgi apparatus and the subsequent processing/maturation of SREBPF2, ultimately down-regulating cholesterol biosynthesis. The polypeptide is RING finger protein 145 (Mus musculus (Mouse)).